The following is a 369-amino-acid chain: Core histone macro-H2A.1 (369 aa).

K7 and K9 each carry N6-lactoyllysine; alternate. The region spanning 15-90 is the Histone H2A domain; it reads RSAKAGVIFP…ILLAVANDEE (76 aa). Residue K18 is modified to N6-methyllysine. K116 is subject to N6-acetyllysine; alternate. K116 is covalently cross-linked (Glycyl lysine isopeptide (Lys-Gly) (interchain with G-Cter in ubiquitin); alternate). K117 is covalently cross-linked (Glycyl lysine isopeptide (Lys-Gly) (interchain with G-Cter in ubiquitin)). K123 is subject to N6-acetyllysine; alternate. K123 is subject to N6,N6-dimethyllysine; alternate. A Glycyl lysine isopeptide (Lys-Gly) (interchain with G-Cter in SUMO2); alternate cross-link involves residue K123. A disordered region spans residues 128-180; that stretch reads ITPPPAKKAKSPSQKKTVSKKTGGKKGARKSKKKQGEVSKSASADSTTEGTPA. The residue at position 129 (T129) is a Phosphothreonine. A compositionally biased stretch (basic residues) spans 144-160; that stretch reads TVSKKTGGKKGARKSKK. Residues 165–177 show a composition bias toward polar residues; it reads VSKSASADSTTEG. A Glycyl lysine isopeptide (Lys-Gly) (interchain with G-Cter in SUMO2) cross-link involves residue K167. Phosphoserine occurs at positions 170 and 173. Position 178 is a phosphothreonine (T178). Residues 184–367 enclose the Macro domain; the sequence is TVLSTKSLFL…IYVQEMAKLD (184 aa). K189 is covalently cross-linked (Glycyl lysine isopeptide (Lys-Gly) (interchain with G-Cter in SUMO2)). A glycoprotein is bound by residues D203, I204, V226, S275, G312, S313, G314, and N316. Residue K320 forms a Glycyl lysine isopeptide (Lys-Gly) (interchain with G-Cter in SUMO2) linkage.

This sequence belongs to the histone H2A family. The nucleosome is a histone octamer containing two molecules each of H2A, H2B, H3 and H4 assembled in one H3-H4 heterotetramer and two H2A-H2B heterodimers. ADP-ribosylated. Post-translationally, monoubiquitinated at either Lys-116 or Lys-117. May also be polyubiquitinated. Ubiquitination is mediated by the CUL3/SPOP E3 complex and does not promote proteasomal degradation. Instead, it is required for enrichment in inactive X chromosome chromatin. Present in liver (at protein level).

The protein resides in the nucleus. Its subcellular location is the chromosome. Its function is as follows. Variant histone H2A which replaces conventional H2A in a subset of nucleosomes where it represses transcription. Nucleosomes wrap and compact DNA into chromatin, limiting DNA accessibility to the cellular machineries which require DNA as a template. Histones thereby play a central role in transcription regulation, DNA repair, DNA replication and chromosomal stability. DNA accessibility is regulated via a complex set of post-translational modifications of histones, also called histone code, and nucleosome remodeling. Functionally, isoform that specifically binds poly-ADP-ribose and O-acetyl-ADP-ribose and plays a key role in NAD(+) metabolism. Able to bind to the ends of poly-ADP-ribose chains created by PARP1 and cap them. This prevents PARP1 from further addition of ADP-ribose and thus limits the consumption of nuclear NAD(+), allowing the cell to maintain proper NAD(+) levels in both the nucleus and the mitochondria to promote proper mitochondrial respiration. In contrast to isoform 1, does not bind poly-ADP-ribose. The protein is Core histone macro-H2A.1 of Gallus gallus (Chicken).